A 497-amino-acid polypeptide reads, in one-letter code: 4,4'-diaponeurosporene oxygenase (497 aa).

7–19 (VIGGGLGGISAAI) lines the FAD pocket.

Belongs to the carotenoid/retinoid oxidoreductase family. CrtP subfamily. The cofactor is FAD.

It carries out the reaction all-trans-4,4'-diaponeurosporene + 2 AH2 + 2 O2 = 4,4'-diaponeurosporenal + 2 A + 3 H2O. The protein operates within carotenoid biosynthesis; staphyloxanthin biosynthesis; staphyloxanthin from farnesyl diphosphate: step 3/5. Its function is as follows. Involved in the biosynthesis of the yellow-orange carotenoid staphyloxanthin, which plays a role in the virulence via its protective function against oxidative stress. Catalyzes the oxidation of the terminal methyl side group of 4,4'-diaponeurosporene to form 4,4'-diaponeurosporen-4-al. The C40 carotenoid lycopene is a poor substrate. The chain is 4,4'-diaponeurosporene oxygenase from Staphylococcus aureus (strain Mu50 / ATCC 700699).